We begin with the raw amino-acid sequence, 628 residues long: Nuclear RNA export factor 1 (628 aa).

The tract at residues 47-83 (DTQSRYEDDDEPAVPVRASLTSASSRGRGGSSRGFGQ) is disordered. Over residues 63 to 72 (RASLTSASSR) the composition is skewed to low complexity. The region spanning 100-179 (YKCRATGAAK…EFYTSKVPAP (80 aa)) is the RRM domain. 2 LRR repeats span residues 245–270 (NIVALSLSNNRIRHLDYASALVSIAK) and 271–294 (FVMELDLSHNHISTEKELEKFAGL). Residues 365–526 (LVEQFVTSYF…VAVISDQLFI (162 aa)) form the NTF2 domain. Residues 576–628 (PIREEMIKAMCQFSGMIPPFSEKCLADCAWNFDFACQKFNEIKSSVPAEAFAH) enclose the TAP-C domain.

The protein belongs to the NXF family. In terms of assembly, interacts with nucleoporins, Nup98, Nup153 and Nup214.

The protein localises to the nucleus. Its function is as follows. Involved in RNA export from the nucleus to the cytoplasm. The polypeptide is Nuclear RNA export factor 1 (nxf-1) (Caenorhabditis elegans).